A 22-amino-acid polypeptide reads, in one-letter code: Motilin (22 aa).

Polar residues predominate over residues 1-11 (FVPFFTQSDIQ). Residues 1–22 (FVPFFTQSDIQKMQEKERNKGQ) are disordered. Basic and acidic residues predominate over residues 12-22 (KMQEKERNKGQ).

This sequence belongs to the motilin family.

Its subcellular location is the secreted. Its function is as follows. Plays an important role in the regulation of interdigestive gastrointestinal motility and indirectly causes rhythmic contraction of duodenal and colonic smooth muscle. The protein is Motilin (MLN) of Gallus gallus (Chicken).